Consider the following 616-residue polypeptide: Pyrophosphate--fructose 6-phosphate 1-phosphotransferase subunit alpha (616 aa).

Belongs to the phosphofructokinase type A (PFKA) family. PPi-dependent PFK group II subfamily. Clade 'Long' sub-subfamily. Tetramer of two alpha (regulatory) and two beta (catalytic) chains.

It localises to the cytoplasm. It functions in the pathway carbohydrate degradation; glycolysis; D-glyceraldehyde 3-phosphate and glycerone phosphate from D-glucose: step 3/4. With respect to regulation, allosterically activated by fructose 2,6-bisphosphate. Its function is as follows. Regulatory subunit of pyrophosphate--fructose 6-phosphate 1-phosphotransferase. The chain is Pyrophosphate--fructose 6-phosphate 1-phosphotransferase subunit alpha from Solanum tuberosum (Potato).